Reading from the N-terminus, the 513-residue chain is MARSNRCVPQNSSIVQIPIEEVFKTQLKSRWQQITMSSASSPPPPQVFVPEPLFSEPPPPPKAPVNVSLSPPPPPRSPSTSTPPRLGNRNPPPPASPSGQEPTTPTMTPGFSLSPPSPSRLSTGAVVGISIGGGVFVLTLIFFLCKKKRPRDDKALPAPIGLVLGIHQSTFTYGELARATNKFSEANLLGEGGFGFVYKGILNNGNEVAVKQLKVGSAQGEKEFQAEVNIISQIHHRNLVSLVGYCIAGAQRLLVYEFVPNNTLEFHLHGKGRPTMEWSLRLKIAVSSSKGLSYLHENCNPKIIHRDIKAANILIDFKFEAKVADFGLAKIALDTNTHVSTRVMGTFGYLAPEYAASGKLTEKSDVYSFGVVLLELITGRRPVDANNVYADDSLVDWARPLLVQALEESNFEGLADIKLNNEYDREEMARMVACAAACVRYTARRRPRMDQVVRVLEGNISPSDLNQGITPGHSNTVSVRLDARAVRVKPHGEMDSRWGRFKRTAQRYGGDSL.

Topologically, residues 1 to 123 are extracellular; sequence MARSNRCVPQ…SPPSPSRLST (123 aa). Residue Asn11 is glycosylated (N-linked (GlcNAc...) asparagine). A compositionally biased stretch (polar residues) spans 27 to 36; the sequence is LKSRWQQITM. The interval 27-119 is disordered; it reads LKSRWQQITM…GFSLSPPSPS (93 aa). Asn66 carries N-linked (GlcNAc...) asparagine glycosylation. A compositionally biased stretch (low complexity) spans 78–89; that stretch reads PSTSTPPRLGNR. Residues 99 to 111 are compositionally biased toward polar residues; sequence GQEPTTPTMTPGF. Residues 124 to 144 form a helical membrane-spanning segment; the sequence is GAVVGISIGGGVFVLTLIFFL. Residues 145–513 are Cytoplasmic-facing; that stretch reads CKKKRPRDDK…TAQRYGGDSL (369 aa). At Thr172 the chain carries Phosphothreonine. Residues 183 to 334 form the Protein kinase domain; the sequence is FSEANLLGEG…DFGLAKIALD (152 aa). ATP is bound by residues 189 to 197 and Lys211; that span reads LGEGGFGFV. Tyr256 carries the phosphotyrosine modification. The active-site Proton acceptor is the Asp307. Ser340 bears the Phosphoserine mark. Thr341 and Thr346 each carry phosphothreonine. Residue Tyr354 is modified to Phosphotyrosine.

It belongs to the protein kinase superfamily. Ser/Thr protein kinase family. As to expression, expressed at low levels in inflorescence bolt, flower buds, siliques, roots, seedlings and leaves.

The protein localises to the cell membrane. The catalysed reaction is L-seryl-[protein] + ATP = O-phospho-L-seryl-[protein] + ADP + H(+). The enzyme catalyses L-threonyl-[protein] + ATP = O-phospho-L-threonyl-[protein] + ADP + H(+). The polypeptide is Proline-rich receptor-like protein kinase PERK3 (PERK3) (Arabidopsis thaliana (Mouse-ear cress)).